We begin with the raw amino-acid sequence, 447 residues long: Serine/threonine-protein phosphatase 2A 55 kDa regulatory subunit B delta isoform (447 aa).

7 WD repeats span residues 26-65 (AEADIISTVEFNYSGELLATGDKGGRVVIFQREQESKNRP), 91-132 (EIEE…KRAE), 175-213 (AHTYHINSISVNSDYETYLSADDLRINLWHLEITDRSFN), 224-264 (ELTE…LCDR), 283-321 (EIISSISDVKFSHSGRYMMTRDYLSVKVWDLNMENRPVE), 338-379 (ENDC…DITL), and 414-447 (DFNKKILHTAWHPKENVIAVAATNNLYIFQDKMN).

This sequence belongs to the phosphatase 2A regulatory subunit B family. As to quaternary structure, PP2A consists of a common heterodimeric core enzyme, composed of a 36 kDa catalytic subunit (subunit C) and a 65 kDa constant regulatory subunit (PR65 or subunit A), that associates with a variety of regulatory subunits.

The protein localises to the cytoplasm. Functionally, substrate-recognition subunit of protein phosphatase 2A (PP2A) that plays a key role in cell cycle by controlling mitosis entry and exit. The activity of PP2A complexes containing PPP2R2D (PR55-delta) fluctuate during the cell cycle: the activity is high in interphase and low in mitosis. This is Serine/threonine-protein phosphatase 2A 55 kDa regulatory subunit B delta isoform (ppp2r2d) from Danio rerio (Zebrafish).